The sequence spans 339 residues: Ketol-acid reductoisomerase (NADP(+)) (339 aa).

Residues 1 to 182 (MRVYYDRDAD…GGGRSGVIET (182 aa)) enclose the KARI N-terminal Rossmann domain. NADP(+)-binding positions include 24 to 27 (YGSQ), R48, S51, T53, and 83 to 86 (DELQ). Residue H108 is part of the active site. G134 provides a ligand contact to NADP(+). The region spanning 183–328 (TFKEECETDL…GKLRAMMPWI (146 aa)) is the KARI C-terminal knotted domain. 4 residues coordinate Mg(2+): D191, E195, E227, and E231. S252 serves as a coordination point for substrate.

Belongs to the ketol-acid reductoisomerase family. Requires Mg(2+) as cofactor.

The enzyme catalyses (2R)-2,3-dihydroxy-3-methylbutanoate + NADP(+) = (2S)-2-acetolactate + NADPH + H(+). The catalysed reaction is (2R,3R)-2,3-dihydroxy-3-methylpentanoate + NADP(+) = (S)-2-ethyl-2-hydroxy-3-oxobutanoate + NADPH + H(+). It participates in amino-acid biosynthesis; L-isoleucine biosynthesis; L-isoleucine from 2-oxobutanoate: step 2/4. It functions in the pathway amino-acid biosynthesis; L-valine biosynthesis; L-valine from pyruvate: step 2/4. Its function is as follows. Involved in the biosynthesis of branched-chain amino acids (BCAA). Catalyzes an alkyl-migration followed by a ketol-acid reduction of (S)-2-acetolactate (S2AL) to yield (R)-2,3-dihydroxy-isovalerate. In the isomerase reaction, S2AL is rearranged via a Mg-dependent methyl migration to produce 3-hydroxy-3-methyl-2-ketobutyrate (HMKB). In the reductase reaction, this 2-ketoacid undergoes a metal-dependent reduction by NADPH to yield (R)-2,3-dihydroxy-isovalerate. The protein is Ketol-acid reductoisomerase (NADP(+)) of Brucella melitensis biotype 2 (strain ATCC 23457).